Consider the following 202-residue polypeptide: ADP-ribosylation factor-like protein 15 (202 aa).

Residues 39–46 (GLTGSGKT), 82–86 (ELGGA), and 142–145 (NHQD) each bind GTP.

This sequence belongs to the small GTPase superfamily. Arf family.

This is ADP-ribosylation factor-like protein 15 (ARL15) from Bos taurus (Bovine).